The primary structure comprises 347 residues: Fructose-1,6-bisphosphatase (347 aa).

Residues 19–23 and 44–48 contribute to the AMP site; these read ILQEQ and SGELS. Residues D85 and E114 each contribute to the Mg(2+) site. 127 to 128 contributes to the AMP binding site; it reads SY. Residues D133, I135, and D136 each coordinate Mg(2+). Position 136–139 (136–139) interacts with substrate; it reads DGSS. AMP is bound at residue K155. Substrate-binding positions include 227–230, 258–263, Y279, and 288–290; these read NEGY, RYIGSM, and KLR. Position 294 (E294) interacts with Mg(2+).

It belongs to the FBPase class 1 family. As to quaternary structure, homotetramer. Requires Mg(2+) as cofactor.

The enzyme catalyses beta-D-fructose 1,6-bisphosphate + H2O = beta-D-fructose 6-phosphate + phosphate. It functions in the pathway carbohydrate biosynthesis; gluconeogenesis. With respect to regulation, subject to complex allosteric regulation. The enzyme can assume an active R-state, or an inactive T-state. Intermediate conformations may exist. AMP acts as allosteric inhibitor. AMP binding affects the turnover of bound substrate and not the affinity for substrate. The chain is Fructose-1,6-bisphosphatase (fbp1) from Schizosaccharomyces pombe (strain 972 / ATCC 24843) (Fission yeast).